The following is a 249-amino-acid chain: tRNA (guanine-N(1)-)-methyltransferase (249 aa).

Residues Gly-113 and 133-138 (LGDFVL) each bind S-adenosyl-L-methionine.

It belongs to the RNA methyltransferase TrmD family. Homodimer.

It is found in the cytoplasm. The catalysed reaction is guanosine(37) in tRNA + S-adenosyl-L-methionine = N(1)-methylguanosine(37) in tRNA + S-adenosyl-L-homocysteine + H(+). Functionally, specifically methylates guanosine-37 in various tRNAs. This Leptothrix cholodnii (strain ATCC 51168 / LMG 8142 / SP-6) (Leptothrix discophora (strain SP-6)) protein is tRNA (guanine-N(1)-)-methyltransferase.